The sequence spans 453 residues: Ribulose bisphosphate carboxylase large chain (453 aa).

Residues 1–2 (MS) constitute a propeptide that is removed on maturation. Position 3 is an N-acetylproline (P3). The residue at position 14 (K14) is an N6,N6,N6-trimethyllysine. Substrate is bound by residues N123 and T173. Residue K175 is the Proton acceptor of the active site. Position 177 (K177) interacts with substrate. Residues K201, D203, and E204 each contribute to the Mg(2+) site. At K201 the chain carries N6-carboxylysine. H294 serves as the catalytic Proton acceptor. Substrate is bound by residues R295, H327, and S379.

The protein belongs to the RuBisCO large chain family. Type I subfamily. Heterohexadecamer of 8 large chains and 8 small chains; disulfide-linked. The disulfide link is formed within the large subunit homodimers. Requires Mg(2+) as cofactor. Post-translationally, the disulfide bond which can form in the large chain dimeric partners within the hexadecamer appears to be associated with oxidative stress and protein turnover.

The protein localises to the plastid. Its subcellular location is the chloroplast. It catalyses the reaction 2 (2R)-3-phosphoglycerate + 2 H(+) = D-ribulose 1,5-bisphosphate + CO2 + H2O. The catalysed reaction is D-ribulose 1,5-bisphosphate + O2 = 2-phosphoglycolate + (2R)-3-phosphoglycerate + 2 H(+). Its function is as follows. RuBisCO catalyzes two reactions: the carboxylation of D-ribulose 1,5-bisphosphate, the primary event in carbon dioxide fixation, as well as the oxidative fragmentation of the pentose substrate in the photorespiration process. Both reactions occur simultaneously and in competition at the same active site. This chain is Ribulose bisphosphate carboxylase large chain, found in Cruciata glabra (Slender crosswort).